The primary structure comprises 485 residues: Warthog protein 1 (485 aa).

Positions 1 to 21 (MMVMNPLTATFLAALIGTAAS) are cleaved as a signal peptide. Positions 236–258 (DQRLSPSTDVQSDSYVSPTEADP) are disordered. Polar residues predominate over residues 239–252 (LSPSTDVQSDSYVS).

This sequence belongs to the hedgehog family. In terms of processing, the C-terminal domain displays an autoproteolysis activity.

Its subcellular location is the secreted. It localises to the cell surface. It is found in the cell membrane. The protein resides in the extracellular space. Functionally, intercellular signal essential for a variety of patterning events during development. The protein is Warthog protein 1 (wrt-1) of Caenorhabditis elegans.